The chain runs to 311 residues: Lipoyl synthase (311 aa).

7 residues coordinate [4Fe-4S] cluster: cysteine 47, cysteine 52, cysteine 58, cysteine 73, cysteine 77, cysteine 80, and serine 286. Residues 59-276 (WSRHTATYLA…RSVGESLGLF (218 aa)) enclose the Radical SAM core domain.

Belongs to the radical SAM superfamily. Lipoyl synthase family. It depends on [4Fe-4S] cluster as a cofactor.

The protein resides in the cytoplasm. It carries out the reaction [[Fe-S] cluster scaffold protein carrying a second [4Fe-4S](2+) cluster] + N(6)-octanoyl-L-lysyl-[protein] + 2 oxidized [2Fe-2S]-[ferredoxin] + 2 S-adenosyl-L-methionine + 4 H(+) = [[Fe-S] cluster scaffold protein] + N(6)-[(R)-dihydrolipoyl]-L-lysyl-[protein] + 4 Fe(3+) + 2 hydrogen sulfide + 2 5'-deoxyadenosine + 2 L-methionine + 2 reduced [2Fe-2S]-[ferredoxin]. It participates in protein modification; protein lipoylation via endogenous pathway; protein N(6)-(lipoyl)lysine from octanoyl-[acyl-carrier-protein]: step 2/2. Catalyzes the radical-mediated insertion of two sulfur atoms into the C-6 and C-8 positions of the octanoyl moiety bound to the lipoyl domains of lipoate-dependent enzymes, thereby converting the octanoylated domains into lipoylated derivatives. The polypeptide is Lipoyl synthase (Chlamydia trachomatis serovar D (strain ATCC VR-885 / DSM 19411 / UW-3/Cx)).